We begin with the raw amino-acid sequence, 155 residues long: Transcriptional repressor NrdR (155 aa).

Residues 3–34 fold into a zinc finger; the sequence is CPKCDHNGTRVLDSRPVQDHYSIRRRRECEKC. One can recognise an ATP-cone domain in the interval 49-139; sequence LIIVKKDGNR…VYRQFKDITV (91 aa).

This sequence belongs to the NrdR family. It depends on Zn(2+) as a cofactor.

Functionally, negatively regulates transcription of bacterial ribonucleotide reductase nrd genes and operons by binding to NrdR-boxes. In Exiguobacterium sp. (strain ATCC BAA-1283 / AT1b), this protein is Transcriptional repressor NrdR.